Consider the following 300-residue polypeptide: MSAKVVLKDFLSQAPIDKLKATLSGHLPVSCITMDAKITSLQPGYHFLFFSLASPESNLNSDGYESLYSPKPNNPFSFKRRIWLHGVLRFHRPLHLFQTSECHELIQEESVKSPSITKEVEACLPKSSFLTKPTSEKQTKHVYIRRKIYDSQHQLCIEEDRTLAYLNRQELAIPKTLRSKSIPQHSWVFTPTPIMVFRYSALMFNAHMIHWNATYATKSENYPNLVLPGPLLVTSMLEYFRSVYPQMSKNMKRFEFRLLSPAFVNQPLRICISETGNLWIDRFTTDLDPPSLIARGRVYT.

It belongs to the HTD2 family.

The protein localises to the mitochondrion. Mitochondrial 3-hydroxyacyl-thioester dehydratase involved in fatty acid biosynthesis. Required for respiratory growth and for normal mitochondrial morphology. In Schizosaccharomyces pombe (strain 972 / ATCC 24843) (Fission yeast), this protein is Hydroxyacyl-thioester dehydratase type 2, mitochondrial (htd2).